The primary structure comprises 513 residues: uncharacterized protein (513 aa).

The region spanning 254–447 (IPQLPSKLLE…INTIRFHHNL (194 aa)) is the HDOD domain.

This is an uncharacterized protein from Treponema pallidum (strain Nichols).